Reading from the N-terminus, the 269-residue chain is 4-hydroxy-tetrahydrodipicolinate reductase (269 aa).

Residues 11–16 and glutamate 37 each bind NAD(+); that span reads GASGRM. Arginine 38 is an NADP(+) binding site. NAD(+) contacts are provided by residues 101-103 and 125-128; these read GTT and AGNM. Residue histidine 158 is the Proton donor/acceptor of the active site. Histidine 159 contacts (S)-2,3,4,5-tetrahydrodipicolinate. Residue lysine 162 is the Proton donor of the active site. Residue 168 to 169 coordinates (S)-2,3,4,5-tetrahydrodipicolinate; it reads GT.

The protein belongs to the DapB family.

It localises to the cytoplasm. The catalysed reaction is (S)-2,3,4,5-tetrahydrodipicolinate + NAD(+) + H2O = (2S,4S)-4-hydroxy-2,3,4,5-tetrahydrodipicolinate + NADH + H(+). The enzyme catalyses (S)-2,3,4,5-tetrahydrodipicolinate + NADP(+) + H2O = (2S,4S)-4-hydroxy-2,3,4,5-tetrahydrodipicolinate + NADPH + H(+). It functions in the pathway amino-acid biosynthesis; L-lysine biosynthesis via DAP pathway; (S)-tetrahydrodipicolinate from L-aspartate: step 4/4. Catalyzes the conversion of 4-hydroxy-tetrahydrodipicolinate (HTPA) to tetrahydrodipicolinate. The polypeptide is 4-hydroxy-tetrahydrodipicolinate reductase (Cereibacter sphaeroides (strain KD131 / KCTC 12085) (Rhodobacter sphaeroides)).